The following is a 354-amino-acid chain: Uroporphyrinogen decarboxylase (354 aa).

Residues 27 to 31 (RQAGR), D77, Y154, S209, and H327 each bind substrate.

This sequence belongs to the uroporphyrinogen decarboxylase family. Homodimer.

The protein localises to the cytoplasm. It carries out the reaction uroporphyrinogen III + 4 H(+) = coproporphyrinogen III + 4 CO2. It participates in porphyrin-containing compound metabolism; protoporphyrin-IX biosynthesis; coproporphyrinogen-III from 5-aminolevulinate: step 4/4. Catalyzes the decarboxylation of four acetate groups of uroporphyrinogen-III to yield coproporphyrinogen-III. The protein is Uroporphyrinogen decarboxylase of Shewanella amazonensis (strain ATCC BAA-1098 / SB2B).